A 283-amino-acid chain; its full sequence is 2-dehydro-3-deoxyphosphooctonate aldolase (283 aa).

Belongs to the KdsA family.

The protein localises to the cytoplasm. The enzyme catalyses D-arabinose 5-phosphate + phosphoenolpyruvate + H2O = 3-deoxy-alpha-D-manno-2-octulosonate-8-phosphate + phosphate. It functions in the pathway carbohydrate biosynthesis; 3-deoxy-D-manno-octulosonate biosynthesis; 3-deoxy-D-manno-octulosonate from D-ribulose 5-phosphate: step 2/3. It participates in bacterial outer membrane biogenesis; lipopolysaccharide biosynthesis. The polypeptide is 2-dehydro-3-deoxyphosphooctonate aldolase (Vibrio parahaemolyticus serotype O3:K6 (strain RIMD 2210633)).